The sequence spans 335 residues: Putative serine/threonine-protein kinase 040L (335 aa).

Positions 33 to 329 (YYYQEFHDEG…DRLTELHHHL (297 aa)) constitute a Protein kinase domain. Residues 39–47 (HDEGGYGSI) and Lys-62 each bind ATP. The active-site Proton acceptor is Asp-196.

Belongs to the protein kinase superfamily. Ser/Thr protein kinase family.

The sequence is that of Putative serine/threonine-protein kinase 040L from Invertebrate iridescent virus 3 (IIV-3).